Here is a 357-residue protein sequence, read N- to C-terminus: Chorismate synthase (357 aa).

The segment covering 38–49 (EKDIQPDLDRRK) has biased composition (basic and acidic residues). Positions 38 to 60 (EKDIQPDLDRRKPGTSRYTTPRR) are disordered. The NADP(+) site is built by arginine 48 and arginine 54. FMN contacts are provided by residues 125-127 (RSS), 243-244 (NA), glycine 283, 298-302 (KPTSS), and arginine 324.

The protein belongs to the chorismate synthase family. In terms of assembly, homotetramer. Requires FMNH2 as cofactor.

It catalyses the reaction 5-O-(1-carboxyvinyl)-3-phosphoshikimate = chorismate + phosphate. Its pathway is metabolic intermediate biosynthesis; chorismate biosynthesis; chorismate from D-erythrose 4-phosphate and phosphoenolpyruvate: step 7/7. Functionally, catalyzes the anti-1,4-elimination of the C-3 phosphate and the C-6 proR hydrogen from 5-enolpyruvylshikimate-3-phosphate (EPSP) to yield chorismate, which is the branch point compound that serves as the starting substrate for the three terminal pathways of aromatic amino acid biosynthesis. This reaction introduces a second double bond into the aromatic ring system. The protein is Chorismate synthase of Haemophilus influenzae (strain PittEE).